The sequence spans 334 residues: O(6)-methylguanine-induced apoptosis 2 (334 aa).

The interval 1–60 is disordered; it reads MDNSAQKNERTGKHPRRASEVQKGFTAAYPTQSSIPFKSQASVIPESEKKGFNSQAKRFP. The span at 7–20 shows a compositional bias: basic and acidic residues; that stretch reads KNERTGKHPRRASE. Polar residues predominate over residues 29 to 42; that stretch reads YPTQSSIPFKSQAS. STPGR repeat units lie at residues 67 to 74, 109 to 117, 148 to 155, 187 to 206, 225 to 257, 267 to 282, and 306 to 316; these read PGPGFYNV, PAANAYTIP, PAPNYYNA, GPPPGHYDINESLVKQSPNT, GPGPGYYNPSDCTKVPKKTLFPKNPILNFSAQP, PGPGQYEIVDYLGPRK, and LPGPATYKPEL. Tyrosine 72 carries the post-translational modification Phosphotyrosine.

Belongs to the STPG1 family.

The protein resides in the cytoplasm. It localises to the nucleus. In terms of biological role, may positively contribute to the induction of apoptosis triggered by O(6)-methylguanine. In Homo sapiens (Human), this protein is O(6)-methylguanine-induced apoptosis 2 (STPG1).